We begin with the raw amino-acid sequence, 142 residues long: Transcriptional regulator MraZ (142 aa).

2 SpoVT-AbrB domains span residues 5 to 47 and 76 to 119; these read EYQH…TINE and ACIV…SREK.

It belongs to the MraZ family. In terms of assembly, forms oligomers.

The protein localises to the cytoplasm. It localises to the nucleoid. This is Transcriptional regulator MraZ from Clostridium botulinum (strain Eklund 17B / Type B).